The primary structure comprises 202 residues: Protein TIFY 11g (202 aa).

Over residues 1–11 the composition is skewed to gly residues; that stretch reads MDAVGAAGGGA. Residues 1–31 are disordered; sequence MDAVGAAGGGAMLPAAARRGQPPQPPCMTTA. The segment covering 12-21 has biased composition (low complexity); that stretch reads MLPAAARRGQ. A Tify domain is found at 101–136; that stretch reads ATAPTAPLTIVYGGQVLVFEHYTAEAAEKLVQRTQH. The Jas motif lies at 185 to 200; that stretch reads PIARKASLQRFLQKRK. Residues 187–194 carry the Nuclear localization signal motif; sequence ARKASLQR.

This sequence belongs to the TIFY/JAZ family. Post-translationally, ubiquitinated. Targeted for degradation by the SCF(COI1) E3 ubiquitin ligase-proteasome pathway during jasmonate signaling.

Its subcellular location is the nucleus. Repressor of jasmonate responses. In Oryza sativa subsp. japonica (Rice), this protein is Protein TIFY 11g.